The primary structure comprises 111 residues: Repressed By RIM101 protein 1 (111 aa).

Residues 1–19 (MKFSTTLLALTASIAAVMS) form the signal peptide. The interval 71 to 90 (SGASSATGGSSAAKSGSSSG) is disordered. Ser81 carries GPI-anchor amidated serine lipidation. Residues 82 to 111 (AAKSGSSSGAGFAPVAGAGSLAAIAGLLLL) constitute a propeptide, removed in mature form.

Post-translationally, the GPI-anchor is attached to the protein in the endoplasmic reticulum and serves to target the protein to the cell surface. There, the glucosamine-inositol phospholipid moiety is cleaved off and the GPI-modified mannoprotein is covalently attached via its lipidless GPI glycan remnant to the 1,6-beta-glucan of the outer cell wall layer.

The protein localises to the secreted. The protein resides in the cell wall. It localises to the membrane. Probable cell wall protein required for filamentation at low pH. This chain is Repressed By RIM101 protein 1 (RBR1), found in Candida albicans (strain SC5314 / ATCC MYA-2876) (Yeast).